Consider the following 233-residue polypeptide: Small ribosomal subunit protein uS3 (233 aa).

The region spanning 39-107 is the KH type-2 domain; the sequence is VRQFLMKTLE…PVQINISEVR (69 aa).

This sequence belongs to the universal ribosomal protein uS3 family. As to quaternary structure, part of the 30S ribosomal subunit. Forms a tight complex with proteins S10 and S14.

Functionally, binds the lower part of the 30S subunit head. Binds mRNA in the 70S ribosome, positioning it for translation. The chain is Small ribosomal subunit protein uS3 from Buchnera aphidicola subsp. Acyrthosiphon pisum (strain APS) (Acyrthosiphon pisum symbiotic bacterium).